Reading from the N-terminus, the 142-residue chain is Putative pre-16S rRNA nuclease (142 aa).

It belongs to the YqgF nuclease family.

It is found in the cytoplasm. Could be a nuclease involved in processing of the 5'-end of pre-16S rRNA. This Staphylococcus saprophyticus subsp. saprophyticus (strain ATCC 15305 / DSM 20229 / NCIMB 8711 / NCTC 7292 / S-41) protein is Putative pre-16S rRNA nuclease.